Reading from the N-terminus, the 68-residue chain is Protein SlyX homolog (68 aa).

This sequence belongs to the SlyX family.

This is Protein SlyX homolog from Pseudomonas putida (strain ATCC 700007 / DSM 6899 / JCM 31910 / BCRC 17059 / LMG 24140 / F1).